The following is a 2230-amino-acid chain: DNA polymerase epsilon catalytic subunit A (2230 aa).

Polar residues predominate over residues M1 to S19. A disordered region spans residues M1–R24. Positions 2101, 2104, 2136, and 2139 each coordinate Zn(2+). The segment at C2101–C2139 adopts a CysA-type zinc-finger fold. [4Fe-4S] cluster contacts are provided by C2170, C2173, C2185, and C2187. Positions C2170–C2187 match the CysB motif motif.

This sequence belongs to the DNA polymerase type-B family. Heterotetramer. Consists of 4 subunits: pol2, dpb2, dpb3 and dpb4. The cofactor is [4Fe-4S] cluster.

The protein resides in the nucleus. It catalyses the reaction DNA(n) + a 2'-deoxyribonucleoside 5'-triphosphate = DNA(n+1) + diphosphate. In terms of biological role, DNA polymerase II participates in chromosomal DNA replication. This Aspergillus fumigatus (strain ATCC MYA-4609 / CBS 101355 / FGSC A1100 / Af293) (Neosartorya fumigata) protein is DNA polymerase epsilon catalytic subunit A (pol2).